A 137-amino-acid polypeptide reads, in one-letter code: Transcription antitermination protein NusB (137 aa).

It belongs to the NusB family.

Functionally, involved in transcription antitermination. Required for transcription of ribosomal RNA (rRNA) genes. Binds specifically to the boxA antiterminator sequence of the ribosomal RNA (rrn) operons. The chain is Transcription antitermination protein NusB from Aeromonas salmonicida (strain A449).